Reading from the N-terminus, the 74-residue chain is Turripeptide OL135 (74 aa).

The signal sequence occupies residues 1 to 20 (MKVPIVLMLVLLLIMPLSDG). A propeptide spanning residues 21–28 (YERKRXXX) is cleaved from the precursor.

Belongs to the conopeptide P-like superfamily. In terms of processing, contains 3 disulfide bonds. In terms of tissue distribution, expressed by the venom duct.

The protein localises to the secreted. Functionally, acts as a neurotoxin by inhibiting an ion channel. This Iotyrris olangoensis (Sea snail) protein is Turripeptide OL135.